The sequence spans 491 residues: Pyruvate carboxylase subunit A (491 aa).

Residues 1–445 form the Biotin carboxylation domain; that stretch reads MFSKILVANR…HTHFVDEYRR (445 aa). ATP-binding residues include Lys116, Glu200, and His235. Residues 120 to 316 form the ATP-grasp domain; that stretch reads KKLMKKAGVP…LVKEQIRVAS (197 aa). Arg291 is a catalytic residue.

As to quaternary structure, heterooctamer of four A and four B subunits. It depends on Mg(2+) as a cofactor. The cofactor is Mn(2+). Co(2+) is required as a cofactor.

The enzyme catalyses hydrogencarbonate + pyruvate + ATP = oxaloacetate + ADP + phosphate + H(+). Its pathway is carbohydrate biosynthesis; gluconeogenesis. Inhibited by ADP and alpha-ketoglutarate. Its function is as follows. Pyruvate carboxylase catalyzes a 2-step reaction, involving the ATP-dependent carboxylation of the covalently attached biotin in the first step and the transfer of the carboxyl group to pyruvate in the second. This is Pyruvate carboxylase subunit A (pycA) from Methanothermobacter thermautotrophicus (strain ATCC 29096 / DSM 1053 / JCM 10044 / NBRC 100330 / Delta H) (Methanobacterium thermoautotrophicum).